Here is a 672-residue protein sequence, read N- to C-terminus: Iron-phytosiderophore transporter YSL15 (672 aa).

The span at Met-1–Val-11 shows a compositional bias: basic and acidic residues. The tract at residues Met-1–Pro-27 is disordered. 14 helical membrane-spanning segments follow: residues Gly-47–Leu-67, Gly-70–Trp-90, Cys-115–Leu-135, Gly-158–Ile-178, Leu-218–Tyr-238, Leu-279–Ile-299, Phe-325–Val-345, Met-390–Phe-410, Val-418–Leu-438, Ile-450–Val-470, Val-504–Phe-524, Ile-556–Leu-576, Phe-602–Trp-622, and Ala-630–Phe-650.

This sequence belongs to the YSL (TC 2.A.67.2) family. As to expression, expressed in root phloem and at low levels in the shoot companion cells.

It is found in the cell membrane. Its function is as follows. Involved in Fe(3+) uptake from the rhizosphere and phloem transport of iron. Plays an important role in iron homeostasis during the early stages of growth. Transports Fe(3+)-phytosiderophore, but not Fe(3+)- or Fe(2+)-nicotianamine. May not transport other chelated metals. The sequence is that of Iron-phytosiderophore transporter YSL15 (YSL15) from Oryza sativa subsp. japonica (Rice).